The following is a 903-amino-acid chain: Immunoglobulin superfamily member 22 (903 aa).

Ig-like domains lie at 67–158 (PEFV…LLVT), 232–322 (EAIR…AELT), 418–508 (PIKF…AIVT), and 606–696 (PSVL…LHLS). Fibronectin type-III domains lie at 703–798 (FASQ…AKDP) and 804–898 (LVQD…MPPP).

In Homo sapiens (Human), this protein is Immunoglobulin superfamily member 22 (IGSF22).